The primary structure comprises 48 residues: ATP synthase protein 8 (48 aa).

The helical transmembrane segment at 13–32 (LVYGFALVTILLVLFAQYFL) threads the bilayer.

The protein belongs to the ATPase protein 8 family. In terms of assembly, F-type ATPases have 2 components, CF(1) - the catalytic core - and CF(0) - the membrane proton channel.

The protein resides in the mitochondrion membrane. In terms of biological role, mitochondrial membrane ATP synthase (F(1)F(0) ATP synthase or Complex V) produces ATP from ADP in the presence of a proton gradient across the membrane which is generated by electron transport complexes of the respiratory chain. F-type ATPases consist of two structural domains, F(1) - containing the extramembraneous catalytic core and F(0) - containing the membrane proton channel, linked together by a central stalk and a peripheral stalk. During catalysis, ATP synthesis in the catalytic domain of F(1) is coupled via a rotary mechanism of the central stalk subunits to proton translocation. Part of the complex F(0) domain. Minor subunit located with subunit a in the membrane. The polypeptide is ATP synthase protein 8 (ATP8) (Kluyveromyces lactis (strain ATCC 8585 / CBS 2359 / DSM 70799 / NBRC 1267 / NRRL Y-1140 / WM37) (Yeast)).